The following is a 531-amino-acid chain: Endoglucanase 7 (531 aa).

An N-terminal signal peptide occupies residues 1–27; sequence MRGRALVLVAALLLQLLLLAAAGGAGA. D89 acts as the Nucleophile in catalysis. Catalysis depends on residues H430, D482, and E491.

The protein belongs to the glycosyl hydrolase 9 (cellulase E) family. As to expression, ubiquitous.

Its subcellular location is the secreted. The enzyme catalyses Endohydrolysis of (1-&gt;4)-beta-D-glucosidic linkages in cellulose, lichenin and cereal beta-D-glucans.. The polypeptide is Endoglucanase 7 (GLU10) (Oryza sativa subsp. japonica (Rice)).